The sequence spans 102 residues: Carboxysome shell protein CcmK3 (102 aa).

The 87-residue stretch at 4–90 (AVGTIQTLGF…PQENVETVMP (87 aa)) folds into the BMC domain.

It belongs to the bacterial microcompartments protein family. CcmK subfamily. Interacts stably with CcmK4, probably forms heterohexamers with a 1:2 CcmK3:CcmK4 stoichiometry. Bulky residues in the pore region probably preclude the formation of homohexamers by this subunit.

Its subcellular location is the carboxysome. Its function is as follows. A non-essential, minor shell protein of the carboxysome, a polyhedral inclusion where RuBisCO (ribulose bisphosphate carboxylase, rbcL-rbcS) is sequestered. Hexamers form sheets that form the facets of the polyhedral carboxysome. In PCC 7942 there are several CcmK paralogs with presumably functional differences. This subunit probably only makes heterohexamers with CcmK4. The CcmK3-CcmK4 heterohexmers have been suggested to cap other hexamers, perhaps to alter metabolite flux. The sequence is that of Carboxysome shell protein CcmK3 from Synechococcus elongatus (strain ATCC 33912 / PCC 7942 / FACHB-805) (Anacystis nidulans R2).